The following is a 120-amino-acid chain: CLAVATA3/ESR (CLE)-related protein 9 (120 aa).

Residues M1–A26 form the signal peptide. N-linked (GlcNAc...) asparagine glycosylation occurs at N35. Positions R85 to N120 are disordered. The span at I100–L110 shows a compositional bias: basic and acidic residues. A hydroxyproline mark is found at P112 and P115. P115 is a glycosylation site (O-linked (Ara...) hydroxyproline).

Belongs to the CLV3/ESR signal peptide family. In terms of processing, the O-glycosylation (arabinosylation) of the hydroxyproline Pro-115 enhances binding affinity of the CLE9p peptide for its receptor. In terms of tissue distribution, mostly expressed in leaves, flowers, stems and apex, and, to a lower extent, in seedlings, roots, siliques and pollen.

It localises to the secreted. Its subcellular location is the extracellular space. In terms of biological role, extracellular signal peptide that regulates cell fate. Represses root apical meristem maintenance. Regulates the transition of protophloem cells from proliferation to differentiation, thus impinging on postembryonic growth capacity of the root meristem; this signaling pathway requires CRN and CLV2. The chain is CLAVATA3/ESR (CLE)-related protein 9 from Arabidopsis thaliana (Mouse-ear cress).